A 212-amino-acid polypeptide reads, in one-letter code: Ribosomal RNA large subunit methyltransferase E (212 aa).

Positions 56, 58, 78, 94, and 117 each coordinate S-adenosyl-L-methionine. Residue Lys157 is the Proton acceptor of the active site.

It belongs to the class I-like SAM-binding methyltransferase superfamily. RNA methyltransferase RlmE family.

It localises to the cytoplasm. The enzyme catalyses uridine(2552) in 23S rRNA + S-adenosyl-L-methionine = 2'-O-methyluridine(2552) in 23S rRNA + S-adenosyl-L-homocysteine + H(+). In terms of biological role, specifically methylates the uridine in position 2552 of 23S rRNA at the 2'-O position of the ribose in the fully assembled 50S ribosomal subunit. The chain is Ribosomal RNA large subunit methyltransferase E from Ehrlichia chaffeensis (strain ATCC CRL-10679 / Arkansas).